A 237-amino-acid chain; its full sequence is Uridylate kinase (237 aa).

11-14 lines the ATP pocket; the sequence is KLSG. Gly53 serves as a coordination point for UMP. ATP contacts are provided by Gly54 and Arg58. UMP is bound by residues Asp73 and 134 to 141; that span reads TGNPFFTT. 3 residues coordinate ATP: Thr161, Tyr167, and Asp170.

This sequence belongs to the UMP kinase family. As to quaternary structure, homohexamer.

The protein resides in the cytoplasm. It catalyses the reaction UMP + ATP = UDP + ADP. The protein operates within pyrimidine metabolism; CTP biosynthesis via de novo pathway; UDP from UMP (UMPK route): step 1/1. Inhibited by UTP. In terms of biological role, catalyzes the reversible phosphorylation of UMP to UDP. This chain is Uridylate kinase, found in Nitrosomonas europaea (strain ATCC 19718 / CIP 103999 / KCTC 2705 / NBRC 14298).